The primary structure comprises 240 residues: Rho GDP-dissociation inhibitor 1 (240 aa).

The interval 1-66 (MSLVSGARDM…DDDSKLQLGP (66 aa)) is disordered.

The protein belongs to the Rho GDI family. In terms of assembly, interacts with RAC-like GTP binding proteins ARAC5/ROP4 and ARAC3/ROP6.

The protein resides in the cytoplasm. Its function is as follows. Regulates the GDP/GTP exchange reaction of the Rho proteins by inhibiting the dissociation of GDP from them, and the subsequent binding of GTP to them. This Arabidopsis thaliana (Mouse-ear cress) protein is Rho GDP-dissociation inhibitor 1 (GDI1).